A 255-amino-acid polypeptide reads, in one-letter code: Microfibril-associated glycoprotein 4 (255 aa).

The first 21 residues, 1–21, serve as a signal peptide directing secretion; sequence MKALLALPLLLLLSTPPCAPQ. The Cell attachment site signature appears at 26 to 28; the sequence is RGD. The Fibrinogen C-terminal domain maps to 32-255; that stretch reads RFCLQQPLDC…KRTEMKIRRA (224 aa). N-linked (GlcNAc...) asparagine glycans are attached at residues N87 and N137.

Homodimer. Can also form higher oligomers. Interacts with FBN1, FBN2 and LOX. Interacts with COL1A1 in a Ca (2+)-dependent manner. Interacts with ELN in a Ca (2+)-dependent manner; this interaction promotes ELN self-assembly.

The protein resides in the secreted. It is found in the extracellular space. The protein localises to the extracellular matrix. Functionally, could be involved in calcium-dependent cell adhesion or intercellular interactions. May contribute to the elastic fiber assembly and/or maintenance. This Homo sapiens (Human) protein is Microfibril-associated glycoprotein 4 (MFAP4).